Consider the following 344-residue polypeptide: Glycerol-3-phosphate dehydrogenase [NAD(P)+] (344 aa).

The NADPH site is built by Trp11, Arg31, Arg32, and Lys105. Residues Lys105, Gly133, and Ser135 each coordinate sn-glycerol 3-phosphate. NADPH is bound at residue Ala137. Sn-glycerol 3-phosphate-binding residues include Lys188, Asp241, Ser251, Arg252, and Asn253. Lys188 serves as the catalytic Proton acceptor. Arg252 contacts NADPH. Glu278 lines the NADPH pocket.

The protein belongs to the NAD-dependent glycerol-3-phosphate dehydrogenase family.

The protein resides in the cytoplasm. The catalysed reaction is sn-glycerol 3-phosphate + NAD(+) = dihydroxyacetone phosphate + NADH + H(+). It catalyses the reaction sn-glycerol 3-phosphate + NADP(+) = dihydroxyacetone phosphate + NADPH + H(+). It participates in membrane lipid metabolism; glycerophospholipid metabolism. Catalyzes the reduction of the glycolytic intermediate dihydroxyacetone phosphate (DHAP) to sn-glycerol 3-phosphate (G3P), the key precursor for phospholipid synthesis. This chain is Glycerol-3-phosphate dehydrogenase [NAD(P)+], found in Acidithiobacillus ferrooxidans (strain ATCC 23270 / DSM 14882 / CIP 104768 / NCIMB 8455) (Ferrobacillus ferrooxidans (strain ATCC 23270)).